Here is a 642-residue protein sequence, read N- to C-terminus: LIM domain kinase 2 (642 aa).

2 consecutive LIM zinc-binding domains span residues cysteine 12–aspartate 63 and cysteine 72–cysteine 124. One can recognise a PDZ domain in the interval leucine 152 to proline 239. The disordered stretch occupies residues arginine 282–leucine 304. Positions arginine 286 to leucine 304 are enriched in low complexity. The Protein kinase domain occupies leucine 331 to leucine 608. Residues leucine 337 to alanine 345 and lysine 360 each bind ATP. Residue aspartate 451 is part of the active site. Threonine 505 is subject to Phosphothreonine.

The protein belongs to the protein kinase superfamily. TKL Ser/Thr protein kinase family. Binds ROCK1 and LKAP. As to expression, expressed predominantly in the lung, and faintly in the kidney, liver, brain, spleen, gizzard, and intestine.

It localises to the cytoplasm. Its subcellular location is the cytoskeleton. The protein localises to the spindle. The protein resides in the microtubule organizing center. It is found in the centrosome. It catalyses the reaction L-seryl-[protein] + ATP = O-phospho-L-seryl-[protein] + ADP + H(+). The enzyme catalyses L-threonyl-[protein] + ATP = O-phospho-L-threonyl-[protein] + ADP + H(+). In terms of biological role, serine/threonine-protein kinase that plays an essential role in the regulation of actin filament dynamics. Acts downstream of several Rho family GTPase signal transduction pathways. Involved in astral microtubule organization and mitotic spindle orientation during early stages of mitosis by mediating phosphorylation of TPPP. The chain is LIM domain kinase 2 (LIMK2) from Gallus gallus (Chicken).